The sequence spans 301 residues: MSNDKSYCGFIAIVGRPNVGKSTLLNKLLGQKISITSRKAQTTRHRIVGIHTEGAYQAIYVDTPGLHMEEKRAINRLMNKAASSSIGDVELVIFVVEGTRWTPDDEMVLNKLRDGKAPVILAVNKVDNVQEKADLLPHLQFLASQMNFLDIVPISAETGLNVDTIAAIVRKHLPEATHHFPEDYITDRSQRFMASEIIREKLMRFLGAELPYSVTVEIERFVSNERGGYDINGLILVEREGQKKMVIGNKGAKIKTIGIEARKDMQEMFEAPVHLELWVKVKSGWADDERALRSLGYVDDL.

The region spanning Tyr-7–Glu-175 is the Era-type G domain. Residues Gly-15–Ser-22 are G1. Gly-15–Ser-22 is a binding site for GTP. Residues Gln-41–His-45 are G2. Residues Asp-62–Gly-65 are G3. GTP-binding positions include Asp-62 to Leu-66 and Asn-124 to Asp-127. The segment at Asn-124–Asp-127 is G4. The interval Ile-154–Ala-156 is G5. The KH type-2 domain occupies Leu-206 to Ser-283.

It belongs to the TRAFAC class TrmE-Era-EngA-EngB-Septin-like GTPase superfamily. Era GTPase family. As to quaternary structure, monomer.

It is found in the cytoplasm. The protein localises to the cell inner membrane. Functionally, an essential GTPase that binds both GDP and GTP, with rapid nucleotide exchange. Plays a role in 16S rRNA processing and 30S ribosomal subunit biogenesis and possibly also in cell cycle regulation and energy metabolism. The polypeptide is GTPase Era (Escherichia fergusonii (strain ATCC 35469 / DSM 13698 / CCUG 18766 / IAM 14443 / JCM 21226 / LMG 7866 / NBRC 102419 / NCTC 12128 / CDC 0568-73)).